Reading from the N-terminus, the 899-residue chain is AP-3 complex subunit delta (899 aa).

HEAT repeat units lie at residues 37 to 74 (QSPE…KLTY), 155 to 192 (ELAR…QYPE), 194 to 229 (LRDN…HNPQ), 231 to 267 (FIQL…IEPK), 268 to 305 (LRVK…LNSD), 308 to 344 (DSAV…KINT), 345 to 382 (DFIA…EDNL), 384 to 428 (DFVQ…ITAM), 480 to 518 (RTLA…LLDN), 536 to 580 (ELQQ…LIIS), 590 to 613 (SEAL…SLPL), and 614 to 656 (LLTE…TESE). Disordered stretches follow at residues 668-701 (DGIV…PTHE), 741-768 (NLSN…KKKK), 782-801 (GVNT…SARN), and 849-899 (AAEE…LTTE). Residues 743–759 (SNSKPSSSGSLVRLSSE) show a composition bias toward low complexity. Positions 841–862 (QRLLDESAAAEEEVVVVKKKKR) form a coiled coil. Over residues 857-880 (VKKKKRSKDGSKSSKKKSRSKSKP) the composition is skewed to basic residues.

Belongs to the adaptor complexes large subunit family. As to quaternary structure, adaptor protein complex 3 (AP-3) is a heterotetramer composed of 2 large adaptins (APL5 and APL6), a medium adaptin (APM3) and a small adaptin (APS3).

Its subcellular location is the golgi apparatus. It localises to the cytoplasmic vesicle. It is found in the clathrin-coated vesicle membrane. Functionally, part of the AP-3 complex, an adaptor-related complex which is not clathrin-associated. The complex is associated with the Golgi region as well as more peripheral structures. It facilitates the budding of vesicles from the Golgi membrane and may be directly involved in trafficking to the vacuole. This Eremothecium gossypii (strain ATCC 10895 / CBS 109.51 / FGSC 9923 / NRRL Y-1056) (Yeast) protein is AP-3 complex subunit delta (APL5).